A 425-amino-acid chain; its full sequence is Probable aminotransferase tcpI (425 aa).

K256 is modified (N6-(pyridoxal phosphate)lysine).

Belongs to the class-I pyridoxal-phosphate-dependent aminotransferase family. Pyridoxal 5'-phosphate serves as cofactor.

It functions in the pathway secondary metabolite biosynthesis. In terms of biological role, probable aminotransferase; part of the gene cluster that mediates the biosynthesis of an unusual class of epipolythiodioxopiperazines (ETPs) lacking the reactive thiol group important for toxicity. Firstly, L-tyrosine is prenylated by tcpD, before undergoing condensation with L-glycine in a reaction catalyzed by the NRPS tcpP leading to the diketopiperazine (DKP) backbone. Afterwards the alpha-carbon of tyrosine is oxidized by the cytochrome P450 tcpC to form a hydroxyl group. However, in contrast other ETP biosynthesis pathways studied so far, tcpC is not able to bishydroxylate the DKP at both alpha-carbon positions, but hydroxylates the alpha-carbon of the tyrosine part and the nitrogen of the glycine part. The next steps involve an alpha,beta-elimination reaction catalyzed by tcpI, a methylation by the methyltransferase tcpN the action of the four enzyme cascade tcpG/K/J/I. Due to a dysfunctional cytochrome P450 monooxygenase tcpC, the pathway leads to the biosynthesis of probable non-toxic metabolites lacking the reactive thiol group. The protein is Probable aminotransferase tcpI of Claviceps purpurea (strain 20.1) (Ergot fungus).